A 109-amino-acid chain; its full sequence is Protein phosphatase 1 regulatory subunit 1C (109 aa).

The tract at residues 25–109 is disordered; sequence AEQIRKRRPT…TNEREEQRDH (85 aa). Residues 45–54 show a composition bias toward basic and acidic residues; it reads NPPEIDDKRG. Positions 55 to 75 are enriched in polar residues; the sequence is PNTQGELQNASPKQRKQSVYT. Residues 100-109 show a composition bias toward basic and acidic residues; the sequence is TNEREEQRDH.

The protein belongs to the protein phosphatase inhibitor 1 family.

The protein resides in the cytoplasm. Functionally, may increase cell susceptibility to TNF-induced apoptosis. The sequence is that of Protein phosphatase 1 regulatory subunit 1C (PPP1R1C) from Homo sapiens (Human).